The following is a 359-amino-acid chain: Phospho-N-acetylmuramoyl-pentapeptide-transferase (359 aa).

A run of 10 helical transmembrane segments spans residues 3–23, 55–75, 80–100, 117–137, 156–176, 187–207, 231–251, 255–275, 280–300, and 334–354; these read QILIAVAVAVTVSILLTPVLI, VAILAGIWAGYLGAHLAGLAF, IGASGLLVLGLATALGGVGFI, TAKTVGQITSAVLFGVLVLQF, IATVTLAPVLFVLFCVVIVSA, LDGLAAGTMAMVTAAYVLITF, LALIAAATAGACIGFLWWNAA, IFMGDTGSLALGGVIAGLSVT, ILAVVLGALFVAEITSVVLQI, and FWLLTAITCGLGVALFYGEWL.

Belongs to the glycosyltransferase 4 family. MraY subfamily. Mg(2+) is required as a cofactor.

The protein localises to the cell membrane. It carries out the reaction UDP-N-acetyl-alpha-D-muramoyl-L-alanyl-gamma-D-glutamyl-meso-2,6-diaminopimeloyl-D-alanyl-D-alanine + di-trans,octa-cis-undecaprenyl phosphate = di-trans,octa-cis-undecaprenyl diphospho-N-acetyl-alpha-D-muramoyl-L-alanyl-D-glutamyl-meso-2,6-diaminopimeloyl-D-alanyl-D-alanine + UMP. The protein operates within cell wall biogenesis; peptidoglycan biosynthesis. Catalyzes the initial step of the lipid cycle reactions in the biosynthesis of the cell wall peptidoglycan: transfers peptidoglycan precursor phospho-MurNAc-pentapeptide from UDP-MurNAc-pentapeptide onto the lipid carrier undecaprenyl phosphate, yielding undecaprenyl-pyrophosphoryl-MurNAc-pentapeptide, known as lipid I. This is Phospho-N-acetylmuramoyl-pentapeptide-transferase from Mycobacterium tuberculosis (strain ATCC 25177 / H37Ra).